We begin with the raw amino-acid sequence, 147 residues long: D-aminoacyl-tRNA deacylase (147 aa).

Positions 136-137 match the Gly-cisPro motif, important for rejection of L-amino acids motif; the sequence is GP.

This sequence belongs to the DTD family. In terms of assembly, homodimer.

The protein localises to the cytoplasm. The catalysed reaction is glycyl-tRNA(Ala) + H2O = tRNA(Ala) + glycine + H(+). It carries out the reaction a D-aminoacyl-tRNA + H2O = a tRNA + a D-alpha-amino acid + H(+). Functionally, an aminoacyl-tRNA editing enzyme that deacylates mischarged D-aminoacyl-tRNAs. Also deacylates mischarged glycyl-tRNA(Ala), protecting cells against glycine mischarging by AlaRS. Acts via tRNA-based rather than protein-based catalysis; rejects L-amino acids rather than detecting D-amino acids in the active site. By recycling D-aminoacyl-tRNA to D-amino acids and free tRNA molecules, this enzyme counteracts the toxicity associated with the formation of D-aminoacyl-tRNA entities in vivo and helps enforce protein L-homochirality. In Streptococcus uberis (strain ATCC BAA-854 / 0140J), this protein is D-aminoacyl-tRNA deacylase.